The following is a 298-amino-acid chain: Glutamyl-Q tRNA(Asp) synthetase (298 aa).

L-glutamate contacts are provided by residues 9–13 (RFAPS) and E45. Positions 12 to 22 (PSPSGELHFGS) match the 'HIGH' region motif. Residues C101, C103, Y115, and C119 each coordinate Zn(2+). Y172 and R190 together coordinate L-glutamate. Residues 228–232 (KLSKQ) carry the 'KMSKS' region motif. An ATP-binding site is contributed by K231.

This sequence belongs to the class-I aminoacyl-tRNA synthetase family. GluQ subfamily. Zn(2+) serves as cofactor.

Catalyzes the tRNA-independent activation of glutamate in presence of ATP and the subsequent transfer of glutamate onto a tRNA(Asp). Glutamate is transferred on the 2-amino-5-(4,5-dihydroxy-2-cyclopenten-1-yl) moiety of the queuosine in the wobble position of the QUC anticodon. The polypeptide is Glutamyl-Q tRNA(Asp) synthetase (Salmonella typhimurium (strain LT2 / SGSC1412 / ATCC 700720)).